A 148-amino-acid polypeptide reads, in one-letter code: Arginine repressor (148 aa).

The protein belongs to the ArgR family.

The protein localises to the cytoplasm. It functions in the pathway amino-acid biosynthesis; L-arginine biosynthesis [regulation]. Functionally, regulates arginine biosynthesis genes. This chain is Arginine repressor (argR), found in Streptococcus pneumoniae serotype 4 (strain ATCC BAA-334 / TIGR4).